The following is a 123-amino-acid chain: Aspartate 1-decarboxylase (123 aa).

Residue serine 25 is the Schiff-base intermediate with substrate; via pyruvic acid of the active site. A Pyruvic acid (Ser) modification is found at serine 25. Residue threonine 57 coordinates substrate. The active-site Proton donor is the tyrosine 58. Residue 73-75 participates in substrate binding; that stretch reads GAA.

It belongs to the PanD family. In terms of assembly, heterooctamer of four alpha and four beta subunits. It depends on pyruvate as a cofactor. Is synthesized initially as an inactive proenzyme, which is activated by self-cleavage at a specific serine bond to produce a beta-subunit with a hydroxyl group at its C-terminus and an alpha-subunit with a pyruvoyl group at its N-terminus.

The protein resides in the cytoplasm. It carries out the reaction L-aspartate + H(+) = beta-alanine + CO2. The protein operates within cofactor biosynthesis; (R)-pantothenate biosynthesis; beta-alanine from L-aspartate: step 1/1. Functionally, catalyzes the pyruvoyl-dependent decarboxylation of aspartate to produce beta-alanine. The protein is Aspartate 1-decarboxylase of Clostridium novyi (strain NT).